The primary structure comprises 673 residues: DNA ligase (673 aa).

NAD(+)-binding positions include 34 to 38, 83 to 84, and E116; these read DAEYD and SL. Catalysis depends on K118, which acts as the N6-AMP-lysine intermediate. The NAD(+) site is built by R139, E176, K293, and K317. Positions 411, 414, 429, and 435 each coordinate Zn(2+). Residues 595–673 enclose the BRCT domain; that stretch reads NQQNPFFGKT…EDEFLKWVNS (79 aa).

The protein belongs to the NAD-dependent DNA ligase family. LigA subfamily. Requires Mg(2+) as cofactor. Mn(2+) serves as cofactor.

The catalysed reaction is NAD(+) + (deoxyribonucleotide)n-3'-hydroxyl + 5'-phospho-(deoxyribonucleotide)m = (deoxyribonucleotide)n+m + AMP + beta-nicotinamide D-nucleotide.. In terms of biological role, DNA ligase that catalyzes the formation of phosphodiester linkages between 5'-phosphoryl and 3'-hydroxyl groups in double-stranded DNA using NAD as a coenzyme and as the energy source for the reaction. It is essential for DNA replication and repair of damaged DNA. This chain is DNA ligase, found in Legionella pneumophila (strain Corby).